Reading from the N-terminus, the 103-residue chain is uncharacterized protein (103 aa).

This is an uncharacterized protein from Haemophilus influenzae (strain ATCC 51907 / DSM 11121 / KW20 / Rd).